Here is a 46-residue protein sequence, read N- to C-terminus: Photosystem II reaction center protein K (46 aa).

Residues 1–9 (MLTLLNTFA) constitute a propeptide that is removed on maturation. The helical transmembrane segment at 25-45 (LPLIPLFFFLLVFVWQAAVGF) threads the bilayer.

It belongs to the PsbK family. PSII is composed of 1 copy each of membrane proteins PsbA, PsbB, PsbC, PsbD, PsbE, PsbF, PsbH, PsbI, PsbJ, PsbK, PsbL, PsbM, PsbT, PsbX, PsbY, Psb30/Ycf12, peripheral proteins PsbO, CyanoQ (PsbQ), PsbU, PsbV and a large number of cofactors. It forms dimeric complexes.

It localises to the cellular thylakoid membrane. Functionally, one of the components of the core complex of photosystem II (PSII). PSII is a light-driven water:plastoquinone oxidoreductase that uses light energy to abstract electrons from H(2)O, generating O(2) and a proton gradient subsequently used for ATP formation. It consists of a core antenna complex that captures photons, and an electron transfer chain that converts photonic excitation into a charge separation. The chain is Photosystem II reaction center protein K from Prochlorococcus marinus (strain MIT 9515).